Here is a 194-residue protein sequence, read N- to C-terminus: Peptidyl-tRNA hydrolase (194 aa).

A tRNA-binding site is contributed by Tyr-19. His-24 serves as the catalytic Proton acceptor. The tRNA site is built by Phe-69, Asn-71, and Asn-117.

This sequence belongs to the PTH family. Monomer.

The protein resides in the cytoplasm. It catalyses the reaction an N-acyl-L-alpha-aminoacyl-tRNA + H2O = an N-acyl-L-amino acid + a tRNA + H(+). Its function is as follows. Hydrolyzes ribosome-free peptidyl-tRNAs (with 1 or more amino acids incorporated), which drop off the ribosome during protein synthesis, or as a result of ribosome stalling. Catalyzes the release of premature peptidyl moieties from peptidyl-tRNA molecules trapped in stalled 50S ribosomal subunits, and thus maintains levels of free tRNAs and 50S ribosomes. The sequence is that of Peptidyl-tRNA hydrolase from Neorickettsia sennetsu (strain ATCC VR-367 / Miyayama) (Ehrlichia sennetsu).